We begin with the raw amino-acid sequence, 864 residues long: Leucine--tRNA ligase (864 aa).

A 'HIGH' region motif is present at residues Pro-42–His-52. A 'KMSKS' region motif is present at residues Lys-621–Ser-625. Residue Lys-624 coordinates ATP.

Belongs to the class-I aminoacyl-tRNA synthetase family.

It localises to the cytoplasm. It carries out the reaction tRNA(Leu) + L-leucine + ATP = L-leucyl-tRNA(Leu) + AMP + diphosphate. The protein is Leucine--tRNA ligase of Alkalilimnicola ehrlichii (strain ATCC BAA-1101 / DSM 17681 / MLHE-1).